The following is a 294-amino-acid chain: S-adenosylmethionine uptake transporter (294 aa).

The next 10 membrane-spanning stretches (helical) occupy residues 4–24 (ALKT…SSSA), 39–59 (FEVA…FVFY), 74–91 (ILRG…TYGL), 98–118 (TATV…VFFL), 121–141 (NIIW…VVTL), 148–168 (FNPE…LDII), 177–197 (SMIS…LPVA), 207–227 (FELA…FFLL), 237–257 (ATAP…YFIF), and 260–280 (FPDK…LFII). EamA domains lie at 21-141 (SSSA…VVTL) and 160-280 (ISFA…LFII).

It belongs to the drug/metabolite transporter (DMT) superfamily. 10 TMS drug/metabolite exporter (DME) (TC 2.A.7.3) family.

It is found in the cell inner membrane. Its function is as follows. Transports S-adenosylmethionine. The chain is S-adenosylmethionine uptake transporter (sam) from Rickettsia felis (strain ATCC VR-1525 / URRWXCal2) (Rickettsia azadi).